A 296-amino-acid polypeptide reads, in one-letter code: Peroxidase P7 (296 aa).

Residue Q1 is modified to Pyrrolidone carboxylic acid. Intrachain disulfides connect C11-C91, C44-C49, C97-C292, and C176-C201. H42 acts as the Proton acceptor in catalysis. Ca(2+)-binding residues include D43, V46, G48, D50, and S52. Residue P139 participates in substrate binding. H169 is a binding site for heme b. Ca(2+) is bound at residue T170. A glycan (N-linked (GlcNAc...) asparagine) is linked at N185. Positions 216, 219, and 224 each coordinate Ca(2+).

The protein belongs to the peroxidase family. Classical plant (class III) peroxidase subfamily. Ca(2+) is required as a cofactor. Heme b serves as cofactor.

The catalysed reaction is 2 a phenolic donor + H2O2 = 2 a phenolic radical donor + 2 H2O. In terms of biological role, removal of H(2)O(2), oxidation of toxic reductants, biosynthesis and degradation of lignin, suberization, auxin catabolism, response to environmental stresses such as wounding, pathogen attack and oxidative stress. These functions might be dependent on each isozyme/isoform in each plant tissue. In Brassica rapa subsp. rapa (Turnip), this protein is Peroxidase P7.